The following is a 315-amino-acid chain: Olfactory receptor 5A1 (315 aa).

The Extracellular segment spans residues 1–28; sequence MSITKAWNSSSVTMFILLGFTDHPELQA. A glycan (N-linked (GlcNAc...) asparagine) is linked at N8. A helical membrane pass occupies residues 29-52; it reads LLFVTFLGIYLTTLAWNLALIFLI. At 53–60 the chain is on the cytoplasmic side; the sequence is RGDTHLHT. A helical transmembrane segment spans residues 61–82; that stretch reads PMYFFLSNLSFIDICYSSAVAP. The Extracellular segment spans residues 83–103; that stretch reads NMLTDFFWEQKTISFVGCAAQ. Residues C100 and C192 are joined by a disulfide bond. A helical membrane pass occupies residues 104 to 123; it reads FFFFVGMGLSECLLLTAMAY. At 124–142 the chain is on the cytoplasmic side; that stretch reads DRYAAISSPLLYPTIMTQG. A helical transmembrane segment spans residues 143 to 161; sequence LCTRMVVGAYVGGFLSSLI. Over 162-198 the chain is Extracellular; the sequence is QASSIFRLHFCGPNIINHFFCDLPPVLALSCSDTFLS. A helical transmembrane segment spans residues 199–222; sequence QVVNFLVVVTVGGTSFLQLLISYG. Residues 223–239 lie on the Cytoplasmic side of the membrane; sequence YIVSAVLKIPSAEGRWK. Residues 240 to 262 form a helical membrane-spanning segment; the sequence is ACNTCASHLMVVTLLFGTALFVY. Over 263–275 the chain is Extracellular; it reads LRPSSSYLLGRDK. A helical membrane pass occupies residues 276–295; the sequence is VVSVFYSLVIPMLNPLIYSL. The Cytoplasmic segment spans residues 296–315; sequence RNKEIKDALWKVLERKKVFS.

The protein belongs to the G-protein coupled receptor 1 family.

The protein localises to the cell membrane. In terms of biological role, odorant receptor. The sequence is that of Olfactory receptor 5A1 (OR5A1) from Homo sapiens (Human).